A 183-amino-acid polypeptide reads, in one-letter code: MTTASTSQVRQNYHQDSEAAINRQINLELYASYVYLSMSYYFDRDDVALKNFAKYFLHQSHEEREHAEKLMKLQNQRGGRIFLQDIKKPDCDDWESGLNAMECALHLEKNVNQSLLELHKLATDKNDPHLCDFLETHYLNEQVKAIKELGDHVTNLRKMGAPESGLAEYLFDKHTLGDSDNES.

N-acetylmethionine is present on Met1. Thr2 carries the N-acetylthreonine; in Ferritin heavy chain, N-terminally processed modification. The region spanning Gln11–Gly160 is the Ferritin-like diiron domain. Glu28, Glu63, His66, Glu108, and Gln142 together coordinate Fe cation. Residues Ser179 and Ser183 each carry the phosphoserine modification.

This sequence belongs to the ferritin family. Oligomer of 24 subunits. There are two types of subunits: L (light) chain and H (heavy) chain. The major chain can be light or heavy, depending on the species and tissue type. The functional molecule forms a roughly spherical shell with a diameter of 12 nm and contains a central cavity into which the insoluble mineral iron core is deposited. Interacts with NCOA4; NCOA4 promotes targeting of the iron-binding ferritin complex to autolysosomes following starvation or iron depletion.

The protein localises to the cytoplasm. It is found in the lysosome. It localises to the cytoplasmic vesicle. The protein resides in the autophagosome. It catalyses the reaction 4 Fe(2+) + O2 + 4 H(+) = 4 Fe(3+) + 2 H2O. In terms of biological role, stores iron in a soluble, non-toxic, readily available form. Important for iron homeostasis. Has ferroxidase activity. Iron is taken up in the ferrous form and deposited as ferric hydroxides after oxidation. Also plays a role in delivery of iron to cells. Mediates iron uptake in capsule cells of the developing kidney. Delivery to lysosomes is mediated by the cargo receptor NCOA4 for autophagic degradation and release of iron. The chain is Ferritin heavy chain (FTH1) from Pongo abelii (Sumatran orangutan).